The chain runs to 469 residues: MPYTLSDAHHKLITSHLVDTDPEVDSIIKDEIERQKHSIDLIASENFTSTSVFDALGTPLSNKYSEGYPGARYYGGNEHIDRMEILCQQRALKAFHVTPDKWGVNVQTLSGSPANLQVYQAIMKPHERLMGLYLPDGGHLSHGYATENRKISAVSTYFESFPYRVNPETGIIDYDTLEKNAILYRPKVLVAGTSAYCRLIDYKRMREIADKCGAYLMVDMAHISGLIAAGVIPSPFEYADIVTTTTHKSLRGPRGAMIFFRRGVRSINPKTGKEVLYDLENPINFSVFPGHQGGPHNHTIAALATALKQAATPEFKEYQTQVLKNAKALESEFKNLGYRLVSNGTDSHMVLVSLREKGVDGARVEYICEKINIALNKNSIPGDKSALVPGGVRIGAPAMTTRGMGEEDFHRIVQYINKAVEFAQQVQQSLPKDACRLKDFKAKVDEGSDVLNTWKKEIYDWAGEYPLAV.

T20 is modified (phosphothreonine). S26 is subject to Phosphoserine. K248 carries the N6-(pyridoxal phosphate)lysine modification. S429 is subject to Phosphoserine. Residue K456 forms a Glycyl lysine isopeptide (Lys-Gly) (interchain with G-Cter in ubiquitin) linkage.

This sequence belongs to the SHMT family. In terms of assembly, homotetramer. Requires pyridoxal 5'-phosphate as cofactor.

The protein localises to the cytoplasm. It carries out the reaction (6R)-5,10-methylene-5,6,7,8-tetrahydrofolate + glycine + H2O = (6S)-5,6,7,8-tetrahydrofolate + L-serine. It participates in one-carbon metabolism; tetrahydrofolate interconversion. In terms of biological role, interconversion of serine and glycine. This chain is Serine hydroxymethyltransferase, cytosolic, found in Saccharomyces cerevisiae (strain ATCC 204508 / S288c) (Baker's yeast).